We begin with the raw amino-acid sequence, 954 residues long: Mitogen-activated protein kinase kinase kinase 10 (954 aa).

Residues 16-81 (PAGPVWTAVF…PSNYVAPGAP (66 aa)) enclose the SH3 domain. One can recognise a Protein kinase domain in the interval 98 to 360 (LQLEEIIGVG…GSILKRLEVI (263 aa)). Residues 104-112 (IGVGGFGKV) and Lys125 contribute to the ATP site. Asp222 serves as the catalytic Proton acceptor. Thr258 is subject to Phosphothreonine; by autocatalysis. Ser262 carries the post-translational modification Phosphoserine; by autocatalysis and MAP4K1. Leucine-zipper stretches follow at residues 384–405 (IQHMFDDLRTKEKELRSREEEL) and 419–440 (LRRREQELAEREMDIVERELHL). 3 disordered regions span residues 490 to 665 (PTLD…RWGH), 716 to 739 (RFPRGLSPPARPHGRREDVGPGLG), and 757 to 954 (STRS…HGSH). Phosphoserine is present on residues Ser498, Ser502, and Ser506. Residues 501-511 (ASPPASPSIIP) are compositionally biased toward low complexity. Thr558 is modified (phosphothreonine). Residues 566 to 578 (QKERVGGEERLKG) are compositionally biased toward basic and acidic residues. Residues 611–620 (EMEEFAEAED) are compositionally biased toward acidic residues. The segment covering 631–640 (STPSYLSVPL) has biased composition (low complexity). The span at 773 to 790 (APSPPPSPPAPTPTPSPS) shows a compositional bias: pro residues. Position 857 is an omega-N-methylarginine (Arg857). Positions 913–927 (PSRPDTPESPGPPSV) are enriched in pro residues.

The protein belongs to the protein kinase superfamily. STE Ser/Thr protein kinase family. MAP kinase kinase kinase subfamily. Homodimer. Interacts with SH3RF2. Requires Mg(2+) as cofactor. In terms of processing, autophosphorylation on serine and threonine residues within the activation loop plays a role in enzyme activation. Expressed in brain and skeletal muscle.

The enzyme catalyses L-seryl-[protein] + ATP = O-phospho-L-seryl-[protein] + ADP + H(+). It carries out the reaction L-threonyl-[protein] + ATP = O-phospho-L-threonyl-[protein] + ADP + H(+). Its activity is regulated as follows. Homodimerization via the leucine zipper domains is required for autophosphorylation and subsequent activation. In terms of biological role, activates the JUN N-terminal pathway. The chain is Mitogen-activated protein kinase kinase kinase 10 (MAP3K10) from Homo sapiens (Human).